We begin with the raw amino-acid sequence, 393 residues long: Short-chain dehydrogenase/reductase family 42E member 1 (393 aa).

Y152 functions as the Proton acceptor in the catalytic mechanism. K156 serves as a coordination point for NAD(+). 2 consecutive transmembrane segments (helical) span residues 282–302 (LPLTLVYCFAFLTEMVHFILG) and 371–391 (GLLVFLLIIAVLIWLPSSVIL).

Belongs to the 3-beta-HSD family.

The protein localises to the membrane. The chain is Short-chain dehydrogenase/reductase family 42E member 1 (SDR42E1) from Macaca fascicularis (Crab-eating macaque).